The following is a 485-amino-acid chain: Forkhead box protein N3 (485 aa).

2 disordered regions span residues 1-54 (MGPV…KGGM) and 85-108 (PVQDIDDDTPPSPAQSDMPYDAKQ). Residues 16–30 (ISVSSQCYRSSTLSN) are compositionally biased toward polar residues. Positions 113-209 (KPPYSFSCLI…QALKKTPYHP (97 aa)) form a DNA-binding region, fork-head. Disordered regions lie at residues 316–357 (MESE…ISSS) and 401–449 (PLVE…MKEA). Over residues 338–357 (SSAKSANKRSSSPSDSISSS) the composition is skewed to low complexity. Positions 410-422 (QHKKKQHLLKLRR) are enriched in basic residues.

In terms of tissue distribution, at early cleavage stages, localized within the animal half of the embryo. At gastrulation, expression expands over the whole embryo excluding the future endodermal cells of the blastopore. During neurulation, expressed in the prospective eye field and in the neural crest cells. Strongly enriched in the eye vesicles at stage 26. From stage 29 onwards, expressed predominantly in the eye, the branchial arches and the vagal ganglion. At stage 38, expressed throughout the head with strongest expression in the head mesenchyme and the eye lens.

The protein localises to the nucleus. Functionally, acts as a transcriptional repressor. May be involved in DNA damage-inducible cell cycle arrests (checkpoints). This Xenopus laevis (African clawed frog) protein is Forkhead box protein N3.